The sequence spans 173 residues: Crossover junction endodeoxyribonuclease RuvC (173 aa).

Residues Asp-8, Glu-67, and Asp-139 contribute to the active site. Mg(2+) contacts are provided by Asp-8, Glu-67, and Asp-139.

The protein belongs to the RuvC family. In terms of assembly, homodimer which binds Holliday junction (HJ) DNA. The HJ becomes 2-fold symmetrical on binding to RuvC with unstacked arms; it has a different conformation from HJ DNA in complex with RuvA. In the full resolvosome a probable DNA-RuvA(4)-RuvB(12)-RuvC(2) complex forms which resolves the HJ. The cofactor is Mg(2+).

Its subcellular location is the cytoplasm. The catalysed reaction is Endonucleolytic cleavage at a junction such as a reciprocal single-stranded crossover between two homologous DNA duplexes (Holliday junction).. Functionally, the RuvA-RuvB-RuvC complex processes Holliday junction (HJ) DNA during genetic recombination and DNA repair. Endonuclease that resolves HJ intermediates. Cleaves cruciform DNA by making single-stranded nicks across the HJ at symmetrical positions within the homologous arms, yielding a 5'-phosphate and a 3'-hydroxyl group; requires a central core of homology in the junction. The consensus cleavage sequence is 5'-(A/T)TT(C/G)-3'. Cleavage occurs on the 3'-side of the TT dinucleotide at the point of strand exchange. HJ branch migration catalyzed by RuvA-RuvB allows RuvC to scan DNA until it finds its consensus sequence, where it cleaves and resolves the cruciform DNA. In Yersinia enterocolitica serotype O:8 / biotype 1B (strain NCTC 13174 / 8081), this protein is Crossover junction endodeoxyribonuclease RuvC.